A 376-amino-acid chain; its full sequence is Queuine tRNA-ribosyltransferase (376 aa).

Residue Asp90 is the Proton acceptor of the active site. Substrate contacts are provided by residues 90 to 94 (DSGGF), Asp144, Gln193, and Gly220. The tract at residues 251-257 (GVGTPED) is RNA binding. The active-site Nucleophile is Asp270. The RNA binding; important for wobble base 34 recognition stretch occupies residues 275 to 279 (TRNAR). Zn(2+) contacts are provided by Cys308, Cys310, Cys313, and His339.

Belongs to the queuine tRNA-ribosyltransferase family. Homodimer. Within each dimer, one monomer is responsible for RNA recognition and catalysis, while the other monomer binds to the replacement base PreQ1. The cofactor is Zn(2+).

It catalyses the reaction 7-aminomethyl-7-carbaguanine + guanosine(34) in tRNA = 7-aminomethyl-7-carbaguanosine(34) in tRNA + guanine. Its pathway is tRNA modification; tRNA-queuosine biosynthesis. Its function is as follows. Catalyzes the base-exchange of a guanine (G) residue with the queuine precursor 7-aminomethyl-7-deazaguanine (PreQ1) at position 34 (anticodon wobble position) in tRNAs with GU(N) anticodons (tRNA-Asp, -Asn, -His and -Tyr). Catalysis occurs through a double-displacement mechanism. The nucleophile active site attacks the C1' of nucleotide 34 to detach the guanine base from the RNA, forming a covalent enzyme-RNA intermediate. The proton acceptor active site deprotonates the incoming PreQ1, allowing a nucleophilic attack on the C1' of the ribose to form the product. After dissociation, two additional enzymatic reactions on the tRNA convert PreQ1 to queuine (Q), resulting in the hypermodified nucleoside queuosine (7-(((4,5-cis-dihydroxy-2-cyclopenten-1-yl)amino)methyl)-7-deazaguanosine). This is Queuine tRNA-ribosyltransferase from Campylobacter concisus (strain 13826).